The following is a 469-amino-acid chain: 3-isopropylmalate dehydratase large subunit (469 aa).

Positions 347, 410, and 413 each coordinate [4Fe-4S] cluster.

It belongs to the aconitase/IPM isomerase family. LeuC type 1 subfamily. Heterodimer of LeuC and LeuD. [4Fe-4S] cluster is required as a cofactor.

It carries out the reaction (2R,3S)-3-isopropylmalate = (2S)-2-isopropylmalate. The protein operates within amino-acid biosynthesis; L-leucine biosynthesis; L-leucine from 3-methyl-2-oxobutanoate: step 2/4. Catalyzes the isomerization between 2-isopropylmalate and 3-isopropylmalate, via the formation of 2-isopropylmaleate. In Burkholderia lata (strain ATCC 17760 / DSM 23089 / LMG 22485 / NCIMB 9086 / R18194 / 383), this protein is 3-isopropylmalate dehydratase large subunit.